A 397-amino-acid polypeptide reads, in one-letter code: Lysophospholipid transporter LplT (397 aa).

Over 1–17 (MSESVHTNTSLWSKGMK) the chain is Periplasmic. Residues 18 to 38 (AVIVAQFLSAFGDNALLFATL) form a helical membrane-spanning segment. Over 39–52 (ALLKAQFYPEWSQP) the chain is Cytoplasmic. Residues 53 to 73 (ILQMVFVGAYILFAPFVGQVA) form a helical membrane-spanning segment. At 74–90 (DSFAKGRVMMFANGLKL) the chain is on the periplasmic side. A helical transmembrane segment spans residues 91-111 (LGAASICFGINPFLGYTLVGV). Over 112-144 (GAAAYSPAKYGILGELTTGSKLVKANGLMEAST) the chain is Cytoplasmic. Residues 145–165 (IAAILLGSVAGGVLADWHVLV) traverse the membrane as a helical segment. Position 166 (Ala-166) is a topological domain, periplasmic. The helical transmembrane segment at 167–187 (LAACALAYGGAVVANIYIPKL) threads the bilayer. Residues 188–226 (AAARPGQSWNLINMTRSFLNACTSLWRNGETRFSLVGTS) are Cytoplasmic-facing. Residues 227 to 247 (LFWGAGVTLRFLLVLWVPVAL) traverse the membrane as a helical segment. Residues 248-256 (GITDNATPT) are Periplasmic-facing. Residues 257–277 (YLNAMVAIGIVVGAGAAAKLV) form a helical membrane-spanning segment. Over 278 to 280 (TLE) the chain is Cytoplasmic. Residues 281–301 (TVSRCMPAGILIGVVVLIFSL) traverse the membrane as a helical segment. At 302-304 (QHE) the chain is on the periplasmic side. The helical transmembrane segment at 305–325 (LLPAYALLMLIGVLGGFFVVP) threads the bilayer. Over 326–343 (LNALLQERGKKSVGAGNA) the chain is Cytoplasmic. The chain crosses the membrane as a helical span at residues 344 to 364 (IAVQNLGENSAMLLMLGIYSL). At 365–366 (AV) the chain is on the periplasmic side. A helical transmembrane segment spans residues 367-387 (MVGIPVVPIGIGFGTLFALAI). The Cytoplasmic portion of the chain corresponds to 388 to 397 (TALWIWQRRH).

The protein belongs to the major facilitator superfamily. LplT (TC 2.A.1.42) family.

Its subcellular location is the cell inner membrane. In terms of biological role, catalyzes the facilitated diffusion of 2-acyl-glycero-3-phosphoethanolamine (2-acyl-GPE) into the cell. The sequence is that of Lysophospholipid transporter LplT from Escherichia coli O9:H4 (strain HS).